The following is an 88-amino-acid chain: Small ribosomal subunit protein bS16c (88 aa).

The protein belongs to the bacterial ribosomal protein bS16 family.

Its subcellular location is the plastid. It is found in the chloroplast. The sequence is that of Small ribosomal subunit protein bS16c from Coffea arabica (Arabian coffee).